The primary structure comprises 156 residues: Inorganic triphosphatase (156 aa).

A CYTH domain is found at 2–148; the sequence is GKEIEKKFIV…PRYLNSNLVK (147 aa). Y29 serves as the catalytic Proton acceptor.

In terms of assembly, homodimer.

It carries out the reaction triphosphate + H2O = phosphate + diphosphate. The catalysed reaction is ATP + H2O = ADP + phosphate + H(+). Functionally, involved in the hydrolysis of the beta-gamma-phosphoanhydride linkage of triphosphate-containing substrates (inorganic or nucleoside-linked). Catalyzes vigorously the hydrolysis of inorganic triphosphate (PPPi), however it can also catalyze the hydrolysis of ATP to ADP and phosphate. It can use ribonucleotides such as GTP, CTP, or UTP and deoxynucleotides such as dATP, dGTP, dCTP, and dTTP. In Acetivibrio thermocellus (strain ATCC 27405 / DSM 1237 / JCM 9322 / NBRC 103400 / NCIMB 10682 / NRRL B-4536 / VPI 7372) (Clostridium thermocellum), this protein is Inorganic triphosphatase.